The primary structure comprises 548 residues: Tyrosine-protein phosphatase non-receptor type 61F (548 aa).

The Cytoplasmic portion of the chain corresponds to 1 to 525 (MSEQKTSGSG…KQLAAKKRRS (525 aa)). Residues 33–296 (FYKEICETCD…DFSYQAIIEG (264 aa)) enclose the Tyrosine-protein phosphatase domain. The interval 46–65 (KEKQFSTSESERHTNRGLNR) is disordered. Residue serine 83 is modified to Phosphoserine. Tyrosine 86 is modified (phosphotyrosine). Substrate-binding positions include aspartate 203, 237-243 (CSAGIGR), and glutamine 281. Cysteine 237 acts as the Phosphocysteine intermediate in catalysis. 3 short sequence motifs (PXXP motif (SH3-binding)) span residues 327–330 (PPLP), 339–342 (PLAP), and 394–397 (PPLP). The interval 386 to 517 (EVADSRPLPP…RKQRENEDKQ (132 aa)) is disordered. The segment covering 404-428 (SDSDEDYLLDDDDEDDTDEDEEYET) has biased composition (acidic residues). 2 short sequence motifs (PXXP motif (SH3-binding)) span residues 459-462 (PAVP) and 480-483 (PASP). Residues 502–517 (KVNDMKRKQRENEDKQ) are compositionally biased toward basic and acidic residues. Residues 526 to 545 (LLTYIAAGVVVGVICAYAYT) traverse the membrane as a helical segment. Residues 546–548 (KLG) are Extracellular-facing.

This sequence belongs to the protein-tyrosine phosphatase family. Non-receptor class 1 subfamily. As to quaternary structure, interacts (via C-terminus) with dock/dreadlocks; this interaction is independent of insulin stimulation and is required for dephosphorylation of the insulin-like receptor InR.

The protein localises to the cytoplasm. Its subcellular location is the membrane. It localises to the endomembrane system. It is found in the nucleus. The enzyme catalyses O-phospho-L-tyrosyl-[protein] + H2O = L-tyrosyl-[protein] + phosphate. Its function is as follows. Non-receptor protein tyrosine phosphatase. Required for maintaining dock/dreadlocks in its non-phosphorylated state. Negative regulator of InR/insulin-like receptor signaling through dephosphorylation of tyrosines when recruited by dock/dreadlocks. This is Tyrosine-protein phosphatase non-receptor type 61F from Drosophila melanogaster (Fruit fly).